A 250-amino-acid polypeptide reads, in one-letter code: Expansin-like B1 (250 aa).

The N-terminal stretch at 1–24 (MKHSHVLLLLFVQVIVLLPLLCLS) is a signal peptide. The region spanning 45 to 149 (RGHCGYGEFG…QRIPCRYAGY (105 aa)) is the Expansin-like EG45 domain. N72 carries an N-linked (GlcNAc...) asparagine glycan. One can recognise an Expansin-like CBD domain in the interval 163–245 (HYLAILVLYV…DWTAGATYDS (83 aa)).

This sequence belongs to the expansin family. Expansin-like B subfamily.

Its subcellular location is the secreted. The sequence is that of Expansin-like B1 (EXLB1) from Arabidopsis thaliana (Mouse-ear cress).